Here is a 176-residue protein sequence, read N- to C-terminus: Large ribosomal subunit protein eL20 (176 aa).

K11 participates in a covalent cross-link: Glycyl lysine isopeptide (Lys-Gly) (interchain with G-Cter in SUMO2). At Y63 the chain carries Phosphotyrosine. A Phosphoserine modification is found at S71. K76 carries the N6-succinyllysine modification. S123 carries the post-translational modification Phosphoserine. Residues K128 and K170 each participate in a glycyl lysine isopeptide (Lys-Gly) (interchain with G-Cter in SUMO2) cross-link.

The protein belongs to the eukaryotic ribosomal protein eL20 family. Component of the large ribosomal subunit. Binds IPO9 with high affinity.

The protein localises to the cytoplasm. Its function is as follows. Component of the large ribosomal subunit. The ribosome is a large ribonucleoprotein complex responsible for the synthesis of proteins in the cell. This Oryctolagus cuniculus (Rabbit) protein is Large ribosomal subunit protein eL20 (RPL18A).